Reading from the N-terminus, the 92-residue chain is Alpha-defensin 25 (92 aa).

Residues 1 to 19 (MKTLVLLSALALLAFQVQA) form the signal peptide. The propeptide occupies 20–57 (DPIQNRDEESKIDEQPGKEDQAVSVSFGDPEGSSLQEE). The segment covering 24–40 (NRDEESKIDEQPGKEDQ) has biased composition (basic and acidic residues). The segment at 24 to 53 (NRDEESKIDEQPGKEDQAVSVSFGDPEGSS) is disordered. 3 cysteine pairs are disulfide-bonded: C63/C92, C65/C80, and C70/C91.

Belongs to the alpha-defensin family.

It localises to the secreted. Its function is as follows. May have microbicidal activities. In Mus musculus (Mouse), this protein is Alpha-defensin 25 (Defa25).